A 160-amino-acid chain; its full sequence is 6,7-dimethyl-8-ribityllumazine synthase (160 aa).

5-amino-6-(D-ribitylamino)uracil contacts are provided by residues tryptophan 27, alanine 59 to glutamate 61, and valine 81 to isoleucine 83. Glutamine 86–threonine 87 serves as a coordination point for (2S)-2-hydroxy-3-oxobutyl phosphate. Histidine 89 functions as the Proton donor in the catalytic mechanism. Asparagine 114 contacts 5-amino-6-(D-ribitylamino)uracil. Arginine 128 provides a ligand contact to (2S)-2-hydroxy-3-oxobutyl phosphate.

This sequence belongs to the DMRL synthase family. As to quaternary structure, homopentamer.

It catalyses the reaction (2S)-2-hydroxy-3-oxobutyl phosphate + 5-amino-6-(D-ribitylamino)uracil = 6,7-dimethyl-8-(1-D-ribityl)lumazine + phosphate + 2 H2O + H(+). Its pathway is cofactor biosynthesis; riboflavin biosynthesis; riboflavin from 2-hydroxy-3-oxobutyl phosphate and 5-amino-6-(D-ribitylamino)uracil: step 1/2. Functionally, catalyzes the formation of 6,7-dimethyl-8-ribityllumazine by condensation of 5-amino-6-(D-ribitylamino)uracil with 3,4-dihydroxy-2-butanone 4-phosphate. This is the penultimate step in the biosynthesis of riboflavin. This is 6,7-dimethyl-8-ribityllumazine synthase from Mycolicibacterium paratuberculosis (strain ATCC BAA-968 / K-10) (Mycobacterium paratuberculosis).